The primary structure comprises 228 residues: NGGTEGNMFGCYLGREIFPNGTLYYSKDTHYSVAKIVKLLRIKSTLVESQPNGEMDYADLIKKIKRDNEKHPIIFANIGTTVRGAIDNIAIIQQSISELGIERKDYYLHADAALSGMILPFVDNPQPFNFADGIDSIGVSGHKMIGSPIPCGIVVAKKKNVDRISVEIDYISAHDKTISGSRNGHTPLMMWEAIRSHSWEEWRRRIERSLNMAQYAVDRFQSAGIDAW.

His30 lines the substrate pocket. Lys143 is modified (N6-(pyridoxal phosphate)lysine).

The protein belongs to the group II decarboxylase family. As to quaternary structure, homotetramer. Pyridoxal 5'-phosphate is required as a cofactor.

It carries out the reaction L-histidine + H(+) = histamine + CO2. The protein is Histidine decarboxylase (hdc) of Raoultella ornithinolytica (Klebsiella ornithinolytica).